A 125-amino-acid chain; its full sequence is Small ribosomal subunit protein bS6m (125 aa).

Belongs to the bacterial ribosomal protein bS6 family. In terms of assembly, component of the mitochondrial ribosome small subunit (28S) which comprises a 12S rRNA and about 30 distinct proteins.

The protein resides in the mitochondrion. This chain is Small ribosomal subunit protein bS6m (Mrps6), found in Mus musculus (Mouse).